Consider the following 1026-residue polypeptide: Multidrug resistance protein MdtC (1026 aa).

The next 11 membrane-spanning stretches (helical) occupy residues 12–32 (VATT…FSLL), 333–353 (EVEQ…FIFL), 360–380 (LIPA…MYLC), 387–407 (LSLM…IVVL), 431–451 (VGFT…PLLL), 463–483 (FAVT…TLTP), 528–548 (WVLA…VSIP), 853–873 (LLLI…LYES), 897–917 (LFGA…IGIV), 953–973 (PIMM…LTHG), and 984–1004 (ITIV…TPVV).

It belongs to the resistance-nodulation-cell division (RND) (TC 2.A.6) family. MdtC subfamily. As to quaternary structure, part of a tripartite efflux system composed of MdtA, MdtB and MdtC. MdtC forms a heteromultimer with MdtB.

The protein localises to the cell inner membrane. This chain is Multidrug resistance protein MdtC, found in Serratia proteamaculans (strain 568).